The following is a 255-amino-acid chain: Indole-3-glycerol phosphate synthase (255 aa).

It belongs to the TrpC family.

It catalyses the reaction 1-(2-carboxyphenylamino)-1-deoxy-D-ribulose 5-phosphate + H(+) = (1S,2R)-1-C-(indol-3-yl)glycerol 3-phosphate + CO2 + H2O. It participates in amino-acid biosynthesis; L-tryptophan biosynthesis; L-tryptophan from chorismate: step 4/5. In Streptococcus pneumoniae serotype 19F (strain G54), this protein is Indole-3-glycerol phosphate synthase.